A 74-amino-acid polypeptide reads, in one-letter code: Beta-defensin 39 (74 aa).

An N-terminal signal peptide occupies residues 1–23 (MKISYFLLLILSLGSSQINPVSG). Disulfide bonds link Cys29/Cys58, Cys36/Cys51, and Cys41/Cys59.

Belongs to the beta-defensin family. Only expressed in epididymis (caput, corpus and cauda).

It localises to the secreted. In terms of biological role, has antibacterial activity. The sequence is that of Beta-defensin 39 (Defb39) from Mus musculus (Mouse).